The chain runs to 401 residues: Bifunctional D-cysteine desulfhydrase/1-aminocyclopropane-1-carboxylate deaminase, mitochondrial (401 aa).

A mitochondrion-targeting transit peptide spans 1 to 37; the sequence is MRGRSLTLSRVKLELARRSMSATSVPSMADFLTKKPY. At Arg2 the chain carries N-acetylserine. An N6-(pyridoxal phosphate)lysine modification is found at Lys93. Residue Ser120 is the Nucleophile of the active site.

It belongs to the ACC deaminase/D-cysteine desulfhydrase family. The cofactor is pyridoxal 5'-phosphate. Highly expressed in stems and cauline leaves, and at lower levels in roots, rosette leaves and flowers.

It localises to the mitochondrion. It carries out the reaction D-cysteine + H2O = hydrogen sulfide + pyruvate + NH4(+) + H(+). The catalysed reaction is 1-aminocyclopropane-1-carboxylate + H2O = 2-oxobutanoate + NH4(+). Its function is as follows. Catalyzes the production of hydrogen sulfide (H2S) from cysteine. Is mainly responsible for the degradation of cysteine to generate H2S, a regulator of stomatal movement and closure. Has high affinity for D-cysteine. Possesses 1-aminocyclopropane-1-carboxylic acid (ACC) deaminase activity. Acts as a regulator of ACC levels and causes changes in ethylene levels. The protein is Bifunctional D-cysteine desulfhydrase/1-aminocyclopropane-1-carboxylate deaminase, mitochondrial (DCD) of Arabidopsis thaliana (Mouse-ear cress).